The sequence spans 618 residues: Arginine--tRNA ligase (618 aa).

A 'HIGH' region motif is present at residues 113–123; it reads ANPIHPLHIGH.

This sequence belongs to the class-I aminoacyl-tRNA synthetase family.

It is found in the cytoplasm. It catalyses the reaction tRNA(Arg) + L-arginine + ATP = L-arginyl-tRNA(Arg) + AMP + diphosphate. This chain is Arginine--tRNA ligase, found in Sulfolobus acidocaldarius (strain ATCC 33909 / DSM 639 / JCM 8929 / NBRC 15157 / NCIMB 11770).